Reading from the N-terminus, the 1716-residue chain is DNA-directed RNA polymerase I subunit RPA1 (1716 aa).

Zn(2+) contacts are provided by Cys64, Cys67, Cys74, His77, Cys104, and Cys107. Residues Leu110–Ala201 form a clamp region. 2 residues coordinate Zn(2+): Cys205 and Cys208. A clamp region spans residues Phe327 to Gly433. Residues Asp410–Gly423 are rudder. DNA contacts are provided by Lys431, Arg436, and Arg443. The segment at Tyr475–Val549 is involved in RRN3 binding to Pol I complex. Arg559 contacts RNA. 3 residues coordinate Mg(2+): Asp595, Asp597, and Asp599. RNA is bound at residue Asp599. The segment at Lys812–Phe890 is funnel. A bridging helix region spans residues Arg967–Ile1008. Residues Ala1067–His1162 form a mediates the interaction with TOP2A region. Residues Pro1214–Leu1255 form a trigger loop region. Residue Arg1256 participates in DNA binding. Residues Ala1368 to Ala1493 are disordered. Over residues Thr1380–Glu1397 the composition is skewed to basic and acidic residues. 2 stretches are compositionally biased toward acidic residues: residues Glu1398–Ala1419 and Glu1429–Glu1451. The span at Glu1452–Glu1464 shows a compositional bias: basic and acidic residues. Over residues Pro1465–Ser1477 the composition is skewed to acidic residues.

It belongs to the RNA polymerase beta' chain family. Component of the RNA polymerase I (Pol I) complex consisting of 13 subunits: a ten-subunit catalytic core composed of POLR1A/RPA1, POLR1B/RPA2, POLR1C/RPAC1, POLR1D/RPAC2, POLR1H/RPA12, POLR2E/RPABC1, POLR2F/RPABC2, POLR2H/RPABC3, POLR2K/RPABC4 and POLR2L/RPABC5; a mobile stalk subunit POLR1F/RPA43 protruding from the core and additional subunits homologous to general transcription factors POLR1E/RPA49 and POLR1G/RPA34. Part of Pol I pre-initiation complex (PIC), in which Pol I core assembles with RRN3 and promoter-bound UTBF and SL1/TIF-IB complex. Interacts (via dock II domain) with TOP2A; this interaction may assist Pol I transcription initiation by releasing supercoils occurring during DNA unwinding. Interacts with CAVIN1; this interaction induces the dissociation of Pol I complex paused at rDNA terminator sequences. Interacts with MYO1C. Interacts with ERBB2. Interacts with DDX11. Interacts with RECQL5. Requires Mg(2+) as cofactor. Phosphorylated.

It is found in the nucleus. It localises to the nucleolus. Its subcellular location is the chromosome. It carries out the reaction RNA(n) + a ribonucleoside 5'-triphosphate = RNA(n+1) + diphosphate. Catalytic core component of RNA polymerase I (Pol I), a DNA-dependent RNA polymerase which synthesizes ribosomal RNA precursors using the four ribonucleoside triphosphates as substrates. Transcribes 47S pre-rRNAs from multicopy rRNA gene clusters, giving rise to 5.8S, 18S and 28S ribosomal RNAs. Pol I-mediated transcription cycle proceeds through transcription initiation, transcription elongation and transcription termination stages. During transcription initiation, Pol I pre-initiation complex (PIC) is recruited by the selectivity factor 1 (SL1/TIF-IB) complex bound to the core promoter that precedes an rDNA repeat unit. The PIC assembly bends the promoter favoring the formation of the transcription bubble and promoter escape. Once the polymerase has escaped from the promoter it enters the elongation phase during which RNA is actively polymerized, based on complementarity with the template DNA strand. Highly processive, assembles in structures referred to as 'Miller trees' where many elongating Pol I complexes queue and transcribe the same rDNA coding regions. At terminator sequences downstream of the rDNA gene, PTRF interacts with Pol I and halts Pol I transcription leading to the release of the RNA transcript and polymerase from the DNA. Forms Pol I active center together with the second largest subunit POLR1B/RPA2. Appends one nucleotide at a time to the 3' end of the nascent RNA, with POLR1A/RPA1 contributing a Mg(2+)-coordinating DxDGD motif, and POLR1B/RPA2 participating in the coordination of a second Mg(2+) ion and providing lysine residues believed to facilitate Watson-Crick base pairing between the incoming nucleotide and the template base. Typically, Mg(2+) ions direct a 5' nucleoside triphosphate to form a phosphodiester bond with the 3' hydroxyl of the preceding nucleotide of the nascent RNA, with the elimination of pyrophosphate. Has proofreading activity: Pauses and backtracks to allow the cleavage of a missincorporated nucleotide via POLR1H/RPA12. High Pol I processivity is associated with decreased transcription fidelity. The protein is DNA-directed RNA polymerase I subunit RPA1 of Rattus norvegicus (Rat).